Here is a 601-residue protein sequence, read N- to C-terminus: NADH-quinone oxidoreductase subunit C/D (601 aa).

Positions 1-191 are NADH dehydrogenase I subunit C; that stretch reads MKLTRDFPSN…DPFMLDAAKQ (191 aa). The segment at 215–601 is NADH dehydrogenase I subunit D; it reads DYMFLNLGPN…IDFVMSDVDR (387 aa).

It in the N-terminal section; belongs to the complex I 30 kDa subunit family. This sequence in the C-terminal section; belongs to the complex I 49 kDa subunit family. In terms of assembly, NDH-1 is composed of 13 different subunits. Subunits NuoB, CD, E, F, and G constitute the peripheral sector of the complex.

Its subcellular location is the cell inner membrane. It catalyses the reaction a quinone + NADH + 5 H(+)(in) = a quinol + NAD(+) + 4 H(+)(out). Functionally, NDH-1 shuttles electrons from NADH, via FMN and iron-sulfur (Fe-S) centers, to quinones in the respiratory chain. The immediate electron acceptor for the enzyme in this species is believed to be ubiquinone. Couples the redox reaction to proton translocation (for every two electrons transferred, four hydrogen ions are translocated across the cytoplasmic membrane), and thus conserves the redox energy in a proton gradient. In Aeromonas salmonicida (strain A449), this protein is NADH-quinone oxidoreductase subunit C/D.